The following is a 156-amino-acid chain: Homeobox-leucine zipper protein ATHB-52 (156 aa).

A DNA-binding region (homeobox) is located at residues 8-67 (GKNKKKRLTQDQVRQLEKCFTMNKKLEPDLKLQLSNQLGLPQRQVAVWFQNKRARFKTQS). Residues 68–96 (LEVQHCTLQSKHEAALSDKAKLEHQVQFL) are leucine-zipper.

This sequence belongs to the HD-ZIP homeobox family. Class I subfamily. In terms of tissue distribution, expressed in roots and flowers.

It is found in the nucleus. Its function is as follows. Probable transcription factor. The protein is Homeobox-leucine zipper protein ATHB-52 (ATHB-52) of Arabidopsis thaliana (Mouse-ear cress).